The chain runs to 97 residues: Protein CYSTEINE-RICH TRANSMEMBRANE MODULE 7 (97 aa).

The interval 1-27 (MASYHVSHDSYQSPGPSPLYQPIIEAP) is disordered. A compositionally biased stretch (pro residues) spans 15 to 27 (GPSPLYQPIIEAP). A helical membrane pass occupies residues 68–88 (YVGCFPFLRSCLTTLCCCWFV).

It belongs to the CYSTM1 family. As to quaternary structure, homodimer and heterodimers. Interacts with CYSTM3, CYSTM4, CYSTM5, CYSTM6, CYSTM10, WIH1/CYSTM13 and CYSTM11. Binds weakly to CYSTM1, CYSTM2 and CYSTM12. In terms of tissue distribution, mostly expressed in siliques and, to a lower extent, in stems, roots, leaves and flowers.

The protein resides in the cell membrane. Functionally, involved in resistance to abiotic stress. This is Protein CYSTEINE-RICH TRANSMEMBRANE MODULE 7 from Arabidopsis thaliana (Mouse-ear cress).